The chain runs to 715 residues: Probable phospholipase YOR022C, mitochondrial (715 aa).

A mitochondrion-targeting transit peptide spans 1-22 (MLRFTHRGLPSSTRFRNIFVRL). Disordered regions lie at residues 161–180 (YPVDKENEGEQKNGSSNKDE), 242–268 (TSTSFKAAKTPQTEVADGSNSSKSRSI), and 311–340 (YNNADNSQGANASSKIEDGKNSGASDRQIR). Residues 242 to 251 (TSTSFKAAKT) are compositionally biased toward low complexity. Residues 311–324 (YNNADNSQGANASS) are compositionally biased toward polar residues. Residue Ser501 is part of the active site. In terms of domain architecture, DDHD spans 519-700 (LEFQVDNLFF…AAFILKEILS (182 aa)).

It belongs to the PA-PLA1 family.

It localises to the mitochondrion. In terms of biological role, probable phospholipase that hydrolyzes phosphatidic acid. This is Probable phospholipase YOR022C, mitochondrial from Saccharomyces cerevisiae (strain ATCC 204508 / S288c) (Baker's yeast).